Reading from the N-terminus, the 798-residue chain is Phenylalanine--tRNA ligase beta subunit (798 aa).

In terms of domain architecture, tRNA-binding spans 39–148 (GKDLDNVVIG…EDAPIGTEYR (110 aa)). The 77-residue stretch at 401–477 (PQRAEISLNL…RMYGFDNIEA (77 aa)) folds into the B5 domain. Residues aspartate 455, aspartate 461, glutamate 464, and glutamate 465 each coordinate Mg(2+). The FDX-ACB domain occupies 705-797 (SKYPEVLRDL…IKDKYNGEIR (93 aa)).

This sequence belongs to the phenylalanyl-tRNA synthetase beta subunit family. Type 1 subfamily. As to quaternary structure, tetramer of two alpha and two beta subunits. It depends on Mg(2+) as a cofactor.

The protein resides in the cytoplasm. The catalysed reaction is tRNA(Phe) + L-phenylalanine + ATP = L-phenylalanyl-tRNA(Phe) + AMP + diphosphate + H(+). The chain is Phenylalanine--tRNA ligase beta subunit from Fusobacterium nucleatum subsp. nucleatum (strain ATCC 25586 / DSM 15643 / BCRC 10681 / CIP 101130 / JCM 8532 / KCTC 2640 / LMG 13131 / VPI 4355).